Here is a 256-residue protein sequence, read N- to C-terminus: Trans-aconitate 2-methyltransferase (256 aa).

The protein belongs to the methyltransferase superfamily. Tam family.

The protein resides in the cytoplasm. It carries out the reaction trans-aconitate + S-adenosyl-L-methionine = (E)-3-(methoxycarbonyl)pent-2-enedioate + S-adenosyl-L-homocysteine. Its function is as follows. Catalyzes the S-adenosylmethionine monomethyl esterification of trans-aconitate. This Rhizobium rhizogenes (strain K84 / ATCC BAA-868) (Agrobacterium radiobacter) protein is Trans-aconitate 2-methyltransferase.